A 488-amino-acid chain; its full sequence is Pup--protein ligase (488 aa).

Glu34 contacts Mg(2+). Arg77 is an ATP binding site. Tyr79 contacts Mg(2+). The Proton acceptor role is filled by Asp81. Glu87 provides a ligand contact to Mg(2+). 2 residues coordinate ATP: Thr90 and Trp453.

This sequence belongs to the Pup ligase/Pup deamidase family. Pup-conjugating enzyme subfamily.

The enzyme catalyses ATP + [prokaryotic ubiquitin-like protein]-L-glutamate + [protein]-L-lysine = ADP + phosphate + N(6)-([prokaryotic ubiquitin-like protein]-gamma-L-glutamyl)-[protein]-L-lysine.. Its pathway is protein degradation; proteasomal Pup-dependent pathway. It participates in protein modification; protein pupylation. Catalyzes the covalent attachment of the prokaryotic ubiquitin-like protein modifier Pup to the proteasomal substrate proteins, thereby targeting them for proteasomal degradation. This tagging system is termed pupylation. The ligation reaction involves the side-chain carboxylate of the C-terminal glutamate of Pup and the side-chain amino group of a substrate lysine. In Bifidobacterium dentium (strain ATCC 27534 / DSM 20436 / JCM 1195 / Bd1), this protein is Pup--protein ligase.